The chain runs to 447 residues: Probable alpha-galactosidase B (447 aa).

The first 22 residues, 1–22, serve as a signal peptide directing secretion; sequence MTTFLSLTTAAAVLTLARGSNA. Disulfide bonds link Cys45/Cys77 and Cys127/Cys157. The Nucleophile role is filled by Asp155. Asn162 and Asn180 each carry an N-linked (GlcNAc...) asparagine glycan. A substrate-binding site is contributed by 225–229; the sequence is NWGQA. N-linked (GlcNAc...) asparagine glycosylation occurs at Asn236. Asp247 (proton donor) is an active-site residue. N-linked (GlcNAc...) asparagine glycosylation occurs at Asn286.

This sequence belongs to the glycosyl hydrolase 27 family.

It is found in the secreted. The enzyme catalyses Hydrolysis of terminal, non-reducing alpha-D-galactose residues in alpha-D-galactosides, including galactose oligosaccharides, galactomannans and galactolipids.. In terms of biological role, hydrolyzes a variety of simple alpha-D-galactoside as well as more complex molecules such as oligosaccharides and polysaccharides. This chain is Probable alpha-galactosidase B (aglB), found in Neosartorya fischeri (strain ATCC 1020 / DSM 3700 / CBS 544.65 / FGSC A1164 / JCM 1740 / NRRL 181 / WB 181) (Aspergillus fischerianus).